Reading from the N-terminus, the 357-residue chain is Probable butyrate kinase (357 aa).

This sequence belongs to the acetokinase family.

Its subcellular location is the cytoplasm. The catalysed reaction is butanoate + ATP = butanoyl phosphate + ADP. The chain is Probable butyrate kinase from Thermotoga petrophila (strain ATCC BAA-488 / DSM 13995 / JCM 10881 / RKU-1).